The primary structure comprises 95 residues: Beta-defensin 132 (95 aa).

The first 22 residues, 1 to 22 (MKFLLLVLAALGFLTQVIPASA), serve as a signal peptide directing secretion. 3 cysteine pairs are disulfide-bonded: Cys-27–Cys-55, Cys-35–Cys-49, and Cys-39–Cys-56. Positions 74–95 (HWQSRRRNTQRKDKKQQTTVTS) are disordered. A compositionally biased stretch (basic residues) spans 76 to 87 (QSRRRNTQRKDK).

Belongs to the beta-defensin family.

The protein resides in the secreted. Has antibacterial activity. In Homo sapiens (Human), this protein is Beta-defensin 132 (DEFB132).